Reading from the N-terminus, the 364-residue chain is Peptide chain release factor 2 (364 aa).

Q251 is modified (N5-methylglutamine).

This sequence belongs to the prokaryotic/mitochondrial release factor family. In terms of processing, methylated by PrmC. Methylation increases the termination efficiency of RF2.

The protein localises to the cytoplasm. Its function is as follows. Peptide chain release factor 2 directs the termination of translation in response to the peptide chain termination codons UGA and UAA. The chain is Peptide chain release factor 2 from Campylobacter hominis (strain ATCC BAA-381 / DSM 21671 / CCUG 45161 / LMG 19568 / NCTC 13146 / CH001A).